Here is a 415-residue protein sequence, read N- to C-terminus: Serine hydroxymethyltransferase (415 aa).

(6S)-5,6,7,8-tetrahydrofolate is bound by residues leucine 121 and 125 to 127 (GHL). At lysine 230 the chain carries N6-(pyridoxal phosphate)lysine. 355–357 (SPF) provides a ligand contact to (6S)-5,6,7,8-tetrahydrofolate.

It belongs to the SHMT family. In terms of assembly, homodimer. It depends on pyridoxal 5'-phosphate as a cofactor.

The protein resides in the cytoplasm. The catalysed reaction is (6R)-5,10-methylene-5,6,7,8-tetrahydrofolate + glycine + H2O = (6S)-5,6,7,8-tetrahydrofolate + L-serine. It functions in the pathway one-carbon metabolism; tetrahydrofolate interconversion. Its pathway is amino-acid biosynthesis; glycine biosynthesis; glycine from L-serine: step 1/1. Its function is as follows. Catalyzes the reversible interconversion of serine and glycine with tetrahydrofolate (THF) serving as the one-carbon carrier. This reaction serves as the major source of one-carbon groups required for the biosynthesis of purines, thymidylate, methionine, and other important biomolecules. Also exhibits THF-independent aldolase activity toward beta-hydroxyamino acids, producing glycine and aldehydes, via a retro-aldol mechanism. The polypeptide is Serine hydroxymethyltransferase (Lactococcus lactis subsp. cremoris (strain MG1363)).